Reading from the N-terminus, the 169-residue chain is Probable glutathione peroxidase 2 (169 aa).

The active site involves cysteine 41.

Belongs to the glutathione peroxidase family. Interacts with DJ1A. As to expression, expressed in leaves, stems, flowers, green siliques and roots.

Its subcellular location is the cytoplasm. It localises to the cytosol. The protein localises to the nucleus. The catalysed reaction is 2 glutathione + H2O2 = glutathione disulfide + 2 H2O. May constitute a glutathione peroxidase-like protective system against oxidative stresses. This is Probable glutathione peroxidase 2 (GPX2) from Arabidopsis thaliana (Mouse-ear cress).